A 492-amino-acid polypeptide reads, in one-letter code: ATP synthase subunit beta, chloroplastic (492 aa).

170–177 lines the ATP pocket; it reads GGAGVGKT.

This sequence belongs to the ATPase alpha/beta chains family. F-type ATPases have 2 components, CF(1) - the catalytic core - and CF(0) - the membrane proton channel. CF(1) has five subunits: alpha(3), beta(3), gamma(1), delta(1), epsilon(1). CF(0) has four main subunits: a(1), b(1), b'(1) and c(9-12).

The protein resides in the plastid. It is found in the chloroplast thylakoid membrane. The enzyme catalyses ATP + H2O + 4 H(+)(in) = ADP + phosphate + 5 H(+)(out). Produces ATP from ADP in the presence of a proton gradient across the membrane. The catalytic sites are hosted primarily by the beta subunits. This is ATP synthase subunit beta, chloroplastic from Anthoceros angustus (Hornwort).